A 186-amino-acid polypeptide reads, in one-letter code: Oligoribonuclease (186 aa).

The Exonuclease domain occupies 8 to 171 (LIWIDLEMTG…DDIRESIAEL (164 aa)). Tyr-129 is an active-site residue.

Belongs to the oligoribonuclease family.

Its subcellular location is the cytoplasm. 3'-to-5' exoribonuclease specific for small oligoribonucleotides. This chain is Oligoribonuclease, found in Mannheimia succiniciproducens (strain KCTC 0769BP / MBEL55E).